Consider the following 169-residue polypeptide: uncharacterized protein (169 aa).

The next 2 membrane-spanning stretches (helical) occupy residues arginine 62–leucine 84 and alanine 94–phenylalanine 116.

It localises to the cell membrane. This is an uncharacterized protein from Archaeoglobus fulgidus (strain ATCC 49558 / DSM 4304 / JCM 9628 / NBRC 100126 / VC-16).